A 1964-amino-acid polypeptide reads, in one-letter code: Probable helicase with zinc finger domain (1964 aa).

A C3H1-type zinc finger spans residues serine 178–glutamate 206. The residue at position 248 (serine 248) is a Phosphoserine. Glycine 668–threonine 675 provides a ligand contact to ATP. A DEAA box motif is present at residues aspartate 794–alanine 797. Residues histidine 1116–proline 1127 show a composition bias toward polar residues. The disordered stretch occupies residues histidine 1116–histidine 1135. Threonine 1163 carries the post-translational modification Phosphothreonine. Omega-N-methylarginine is present on arginine 1245. Disordered stretches follow at residues proline 1248 to proline 1350, histidine 1360 to threonine 1379, leucine 1388 to proline 1449, glutamine 1463 to threonine 1491, glutamine 1631 to asparagine 1655, and glutamine 1743 to lysine 1964. 2 stretches are compositionally biased toward basic and acidic residues: residues histidine 1268 to lysine 1281 and asparagine 1292 to aspartate 1308. The segment covering proline 1365–alanine 1374 has biased composition (pro residues). Residues leucine 1388–proline 1431 are compositionally biased toward low complexity. Over residues arginine 1635–proline 1644 the composition is skewed to pro residues. Phosphoserine is present on residues serine 1636, serine 1760, serine 1763, and serine 1788. Positions serine 1755 to proline 1765 are enriched in polar residues. 2 stretches are compositionally biased toward polar residues: residues proline 1799–serine 1813 and tryptophan 1826–proline 1849. Residues lysine 1860–serine 1870 are compositionally biased toward basic and acidic residues. Polar residues-rich tracts occupy residues glutamate 1872–methionine 1881 and isoleucine 1897–alanine 1910. The segment covering proline 1941 to serine 1956 has biased composition (low complexity).

This sequence belongs to the DNA2/NAM7 helicase family. Interacts with POLR2A. Interacts with SMYD3; the interaction may bridge SMYD3 and RNA polymerase II. Interacts with SMYD2.

The protein localises to the nucleus. May act as a helicase that plays a role in RNA metabolism in multiple tissues and organs within the developing embryo. The polypeptide is Probable helicase with zinc finger domain (Helz) (Mus musculus (Mouse)).